The sequence spans 74 residues: Progonadoliberin-3 (74 aa).

The signal sequence occupies residues 1 to 15; sequence VQVVVLALVAQVTLS. Gln-16 bears the Pyrrolidone carboxylic acid mark. Glycine amide is present on Gly-25.

It belongs to the GnRH family.

The protein localises to the secreted. Functionally, stimulates the secretion of gonadotropins. This Oncorhynchus mykiss (Rainbow trout) protein is Progonadoliberin-3 (gnrh3).